Here is a 539-residue protein sequence, read N- to C-terminus: O-phosphoserine--tRNA(Cys) ligase (539 aa).

Residues 188-190 (HMT), 233-235 (SAS), 275-276 (YY), and N327 each bind substrate.

It belongs to the class-II aminoacyl-tRNA synthetase family. O-phosphoseryl-tRNA(Cys) synthetase subfamily. In terms of assembly, homotetramer. Interacts with SepCysS.

It carries out the reaction tRNA(Cys) + O-phospho-L-serine + ATP = O-phospho-L-seryl-tRNA(Cys) + AMP + diphosphate. Functionally, catalyzes the attachment of O-phosphoserine (Sep) to tRNA(Cys). The polypeptide is O-phosphoserine--tRNA(Cys) ligase (Methanosarcina acetivorans (strain ATCC 35395 / DSM 2834 / JCM 12185 / C2A)).